Reading from the N-terminus, the 504-residue chain is Tyrosine-protein phosphatase non-receptor type substrate 1 (504 aa).

Positions 1-30 (MEPAGPAPGRLGPLLCLLLAASCAWSGVAG) are cleaved as a signal peptide. At 31-373 (EEELQVIQPD…NTGSNERNIY (343 aa)) the chain is on the extracellular side. The 106-residue stretch at 32 to 137 (EELQVIQPDK…SPDDVEFKSG (106 aa)) folds into the Ig-like V-type domain. Intrachain disulfides connect Cys55–Cys121 and Cys170–Cys228. Ig-like C1-type domains lie at 148 to 247 (PSAP…ANLS) and 254 to 348 (PTLE…HDLK). N-linked (GlcNAc...) asparagine glycans are attached at residues Asn245, Asn270, Asn292, and Asn319. The cysteines at positions 273 and 331 are disulfide-linked. Residues 336–355 (DGQPAVSKSHDLKVSAHPKE) are compositionally biased toward basic and acidic residues. The tract at residues 336-364 (DGQPAVSKSHDLKVSAHPKEQGSNTAAEN) is disordered. The chain crosses the membrane as a helical span at residues 374–394 (IVVGVVCTLLVALLMAALYLV). The Cytoplasmic portion of the chain corresponds to 395–504 (RIRQKKAQGS…EYASVQVPRK (110 aa)). Positions 402–504 (QGSTSSTRLH…EYASVQVPRK (103 aa)) are disordered. Positions 409-421 (RLHEPEKNAREIT) are enriched in basic and acidic residues. Tyr429 carries the post-translational modification Phosphotyrosine; by Tyr-kinases. The SH2-binding signature appears at 429–432 (YADL). An SH3-binding motif is present at residues 439–444 (KPAPQA). A compositionally biased stretch (polar residues) spans 446–467 (EPNNHTEYASIQTSPQPASEDT). Phosphotyrosine; by Tyr-kinases is present on residues Tyr453 and Tyr470. Short sequence motifs (SH2-binding) lie at residues 453-456 (YASI), 470-473 (YADL), and 496-499 (YASV). Tyr496 carries the phosphotyrosine modification.

In terms of assembly, binds PTPN11 when tyrosine-phosphorylated, except in macrophages, where it primarily binds PTPN6. Binds GRB2 in vitro. Binds FGR. Binds JAK2 irrespective of its phosphorylation status and forms a stable complex. Binds SCAP1 and/or SCAP2. The resulting complex recruits FYB1. Binds PTK2B. Interacts with TRIM2. N-glycosylated. In terms of processing, phosphorylated on tyrosine residues in response to stimulation with EGF, growth hormone, insulin and PDGF. Dephosphorylated by PTPN11. As to expression, ubiquitous. Highly expressed in brain. Detected on myeloid cells, but not T-cells. Detected at lower levels in heart, placenta, lung, testis, ovary, colon, liver, small intestine, prostate, spleen, kidney, skeletal muscle and pancreas.

The protein localises to the membrane. In terms of biological role, immunoglobulin-like cell surface receptor for CD47. Acts as docking protein and induces translocation of PTPN6, PTPN11 and other binding partners from the cytosol to the plasma membrane. Supports adhesion of cerebellar neurons, neurite outgrowth and glial cell attachment. May play a key role in intracellular signaling during synaptogenesis and in synaptic function. Involved in the negative regulation of receptor tyrosine kinase-coupled cellular responses induced by cell adhesion, growth factors or insulin. Mediates negative regulation of phagocytosis, mast cell activation and dendritic cell activation. CD47 binding prevents maturation of immature dendritic cells and inhibits cytokine production by mature dendritic cells. Plays a role in antiviral immunity and limits new world arenavirus infection by decreasing virus internalization. Receptor for THBS1. Interaction with THBS1 stimulates phosphorylation of SIRPA. In response to THBS1, involved in ROS signaling in non-phagocytic cells, stimulating NADPH oxidase-derived ROS production. The protein is Tyrosine-protein phosphatase non-receptor type substrate 1 (SIRPA) of Homo sapiens (Human).